A 567-amino-acid polypeptide reads, in one-letter code: Urease subunit alpha (567 aa).

The 439-residue stretch at 129-567 (GGVDTHIHWI…LPMAQRYFLF (439 aa)) folds into the Urease domain. Ni(2+)-binding residues include histidine 134, histidine 136, and lysine 217. Lysine 217 is modified (N6-carboxylysine). Substrate is bound at residue histidine 219. Residues histidine 246 and histidine 272 each contribute to the Ni(2+) site. The Proton donor role is filled by histidine 320. Aspartate 360 serves as a coordination point for Ni(2+).

This sequence belongs to the metallo-dependent hydrolases superfamily. Urease alpha subunit family. In terms of assembly, heterotrimer of UreA (gamma), UreB (beta) and UreC (alpha) subunits. Three heterotrimers associate to form the active enzyme. Ni cation serves as cofactor. Carboxylation allows a single lysine to coordinate two nickel ions.

The protein localises to the cytoplasm. The enzyme catalyses urea + 2 H2O + H(+) = hydrogencarbonate + 2 NH4(+). It functions in the pathway nitrogen metabolism; urea degradation; CO(2) and NH(3) from urea (urease route): step 1/1. This Citrobacter koseri (strain ATCC BAA-895 / CDC 4225-83 / SGSC4696) protein is Urease subunit alpha.